A 172-amino-acid polypeptide reads, in one-letter code: Signal peptidase complex catalytic subunit SEC11 (172 aa).

At 1–14 (MLSSLGNPRQAAAQ) the chain is on the cytoplasmic side. The chain crosses the membrane as a helical; Signal-anchor for type II membrane protein span at residues 15–35 (LMNFALILSTAFMMWKGLSVI). At 36–172 (TDSPSPIVVV…MGLLVVLQRE (137 aa)) the chain is on the lumenal side. Active-site charge relay system residues include Ser49 and His90. Asn111 carries N-linked (GlcNAc...) asparagine glycosylation. Catalysis depends on Asp115, which acts as the Charge relay system. The interval 158-169 (VMLGIMGLLVVL) is C-terminal short (CTS) helix.

The protein belongs to the peptidase S26B family. Component of the signal peptidase complex (SPC) composed of a catalytic subunit SEC11 and three accessory subunits SPC1, SPC2 and SPC3. The complex induces a local thinning of the ER membrane which is used to measure the length of the signal peptide (SP) h-region of protein substrates. This ensures the selectivity of the complex towards h-regions shorter than 18-20 amino acids. SPC associates with the translocon complex.

It is found in the endoplasmic reticulum membrane. The catalysed reaction is Cleavage of hydrophobic, N-terminal signal or leader sequences from secreted and periplasmic proteins.. Functionally, catalytic component of the signal peptidase complex (SPC) which catalyzes the cleavage of N-terminal signal sequences from nascent proteins as they are translocated into the lumen of the endoplasmic reticulum. Specifically cleaves N-terminal signal peptides that contain a hydrophobic alpha-helix (h-region) shorter than 18-20 amino acids. In Fusarium vanettenii (strain ATCC MYA-4622 / CBS 123669 / FGSC 9596 / NRRL 45880 / 77-13-4) (Fusarium solani subsp. pisi), this protein is Signal peptidase complex catalytic subunit SEC11 (SEC11).